A 268-amino-acid polypeptide reads, in one-letter code: Protein DEEPER ROOTING 1 (268 aa).

Residues 11–21 show a composition bias toward low complexity; sequence LNGKQGNKKPN. Positions 11 to 39 are disordered; sequence LNGKQGNKKPNTVPITTHPAKQEPREEFS. Basic and acidic residues predominate over residues 30–39; the sequence is AKQEPREEFS. The short motif at 44 to 50 is the IGT motif element; it reads GLLAIGT. Positions 220 to 246 are disordered; sequence SRAASMKKYLEDRQIPTKKESNTEDDT. The span at 227–246 shows a compositional bias: basic and acidic residues; the sequence is KYLEDRQIPTKKESNTEDDT.

The protein belongs to the LAZY family. In terms of tissue distribution, expressed in roots.

Its function is as follows. Involved in the development of the root system architecture by influencing lateral root angles and primary root length. The sequence is that of Protein DEEPER ROOTING 1 from Prunus persica (Peach).